We begin with the raw amino-acid sequence, 131 residues long: Insulin-like 3 (131 aa).

Positions 1–20 (MDPRLPAWALVLLGPALVFA) are cleaved as a signal peptide. 3 disulfides stabilise this stretch: cysteine 34-cysteine 116, cysteine 46-cysteine 129, and cysteine 115-cysteine 120. The propeptide at 58-104 (PATGGDRELLQWLERRHLLHGLVADSNLTLGPGLQPLPQTSHHHRHH) is c peptide like.

This sequence belongs to the insulin family. Heterodimer of a B chain and an A chain linked by two disulfide bonds. In terms of tissue distribution, expressed in prenatal and postnatal Leydig cells. Found as well in the corpus luteum, trophoblast, fetal membranes and breast.

Its subcellular location is the secreted. Its function is as follows. Seems to play a role in testicular function. May be a trophic hormone with a role in testicular descent in fetal life. Is a ligand for LGR8 receptor. The polypeptide is Insulin-like 3 (INSL3) (Homo sapiens (Human)).